The following is a 20-amino-acid chain: N-acetyl-D-galactosamine-binding lectin subunit B (20 aa).

As to quaternary structure, disulfide-linked heterodimer of A and B chains.

Its function is as follows. Gal / GalNAc-specific lectin. Agglutinates both native and trypsin-treated rabbit erythrocytes but not human erythrocytes irrespective of blood group type. In Iris hollandica (Dutch iris), this protein is N-acetyl-D-galactosamine-binding lectin subunit B.